An 89-amino-acid polypeptide reads, in one-letter code: Small ribosomal subunit protein bS20 (89 aa).

The disordered stretch occupies residues 1–20; it reads MANHKSAEKRARQTIKRTER.

Belongs to the bacterial ribosomal protein bS20 family.

Its function is as follows. Binds directly to 16S ribosomal RNA. The protein is Small ribosomal subunit protein bS20 of Campylobacter concisus (strain 13826).